The sequence spans 37 residues: Cytochrome b6-f complex subunit 5 (37 aa).

A helical transmembrane segment spans residues 5–25 (LLSGIILGLIPVTLSGLLVAA).

Belongs to the PetG family. As to quaternary structure, the 4 large subunits of the cytochrome b6-f complex are cytochrome b6, subunit IV (17 kDa polypeptide, PetD), cytochrome f and the Rieske protein, while the 4 small subunits are PetG, PetL, PetM and PetN. The complex functions as a dimer.

It localises to the plastid. Its subcellular location is the chloroplast thylakoid membrane. In terms of biological role, component of the cytochrome b6-f complex, which mediates electron transfer between photosystem II (PSII) and photosystem I (PSI), cyclic electron flow around PSI, and state transitions. PetG is required for either the stability or assembly of the cytochrome b6-f complex. This chain is Cytochrome b6-f complex subunit 5, found in Porphyra purpurea (Red seaweed).